A 977-amino-acid polypeptide reads, in one-letter code: Probable RNA-dependent RNA polymerase 5 (977 aa).

The tract at residues 103–122 (EEMSVDSDAPSPKSLKSEDK) is disordered.

This sequence belongs to the RdRP family.

It catalyses the reaction RNA(n) + a ribonucleoside 5'-triphosphate = RNA(n+1) + diphosphate. Probably involved in the RNA silencing pathway and required for the generation of small interfering RNAs (siRNAs). This is Probable RNA-dependent RNA polymerase 5 (RDR5) from Arabidopsis thaliana (Mouse-ear cress).